Consider the following 318-residue polypeptide: Ribosome biogenesis protein RLP7 (318 aa).

Disordered regions lie at residues 1–49 and 101–121; these read MSQP…NRFV and AGSK…DEED. Basic and acidic residues predominate over residues 19–40; the sequence is ADRTRLEKQELAKKRKEQEEKQ. The span at 110-121 shows a compositional bias: acidic residues; sequence ELQDVDEEDEED.

It belongs to the universal ribosomal protein uL30 family.

It localises to the nucleus. It is found in the nucleolus. In terms of biological role, involved in the biogenesis of the 60S ribosomal subunit. May act as a specificity factor that binds precursor rRNAs and tethers the enzymes that carry out the early 5' to 3' exonucleolytic reactions that generate the mature rRNAs. The protein is Ribosome biogenesis protein RLP7 (RLP7) of Kluyveromyces lactis (strain ATCC 8585 / CBS 2359 / DSM 70799 / NBRC 1267 / NRRL Y-1140 / WM37) (Yeast).